Here is a 172-residue protein sequence, read N- to C-terminus: MAKMQAKVQADERDDGLREKMISVNRVTKVVKGGRILGFAALTVVGDGDGRIGMGKGKAKEVPVAVQKAMEQARRNMFKVPLKNGTLQHEVHGKHGASAVLLAPAKAGTGVIAGGPMRAVFDVMGVQNVVAKSHGSTNPYNLVRATLDGLRKQSTPADIAAKRGKSVEDILG.

Positions 17–80 (LREKMISVNR…EQARRNMFKV (64 aa)) constitute an S5 DRBM domain.

Belongs to the universal ribosomal protein uS5 family. Part of the 30S ribosomal subunit. Contacts proteins S4 and S8.

In terms of biological role, with S4 and S12 plays an important role in translational accuracy. Located at the back of the 30S subunit body where it stabilizes the conformation of the head with respect to the body. The protein is Small ribosomal subunit protein uS5 of Burkholderia orbicola (strain AU 1054).